The following is a 179-amino-acid chain: RNA polymerase sigma-E factor (179 aa).

The short motif at 36 to 49 is the Polymerase core binding element; it reads DLLQTALVRTYGRW. A DNA-binding region (H-T-H motif) is located at residues 130–149; that stretch reads TEETAAALGMSAGTVKSTLH.

Belongs to the sigma-70 factor family. ECF subfamily.

Its subcellular location is the cytoplasm. Sigma factors are initiation factors that promote the attachment of RNA polymerase to specific initiation sites and are then released. This sigma factor is required for normal cell wall integrity; it is recruited by RNA polymerase to transcribe genes with cell wall-related functions. This Streptomyces avermitilis (strain ATCC 31267 / DSM 46492 / JCM 5070 / NBRC 14893 / NCIMB 12804 / NRRL 8165 / MA-4680) protein is RNA polymerase sigma-E factor (sigE).